We begin with the raw amino-acid sequence, 288 residues long: Bifunctional protein FolD (288 aa).

NADP(+) is bound by residues 166–168 (GAS) and Ile232.

This sequence belongs to the tetrahydrofolate dehydrogenase/cyclohydrolase family. Homodimer.

The enzyme catalyses (6R)-5,10-methylene-5,6,7,8-tetrahydrofolate + NADP(+) = (6R)-5,10-methenyltetrahydrofolate + NADPH. The catalysed reaction is (6R)-5,10-methenyltetrahydrofolate + H2O = (6R)-10-formyltetrahydrofolate + H(+). It functions in the pathway one-carbon metabolism; tetrahydrofolate interconversion. Functionally, catalyzes the oxidation of 5,10-methylenetetrahydrofolate to 5,10-methenyltetrahydrofolate and then the hydrolysis of 5,10-methenyltetrahydrofolate to 10-formyltetrahydrofolate. In Escherichia coli (strain UTI89 / UPEC), this protein is Bifunctional protein FolD.